Here is a 463-residue protein sequence, read N- to C-terminus: Interstitial collagenase B (463 aa).

The N-terminal stretch at 1 to 17 (MPSLPLLLRLWAASSYS) is a signal peptide. A propeptide spans 18-96 (FPVIQDGLQK…PRCGVPDVAP (79 aa)) (activation peptide). The Cysteine switch motif lies at 87–94 (PRCGVPDV). Cys-89 serves as a coordination point for Zn(2+). A metalloprotease region spans residues 95–273 (APYAITHNNP…PIQLTDATLD (179 aa)). A Ca(2+)-binding site is contributed by Asp-155. His-165 and Asp-167 together coordinate Zn(2+). Positions 172 and 173 each coordinate Ca(2+). Zn(2+) is bound at residue His-180. Ca(2+) is bound by residues Gly-187 and Gly-189. His-193 is a binding site for Zn(2+). Asp-195 contributes to the Ca(2+) binding site. His-215 is a Zn(2+) binding site. Residue Glu-216 is part of the active site. His-219 and His-225 together coordinate Zn(2+). An intrachain disulfide couples Cys-275 to Cys-463. 2 Hemopexin repeats span residues 278–321 (GLTF…WPNL) and 322–368 (PGKF…FGFP). Asp-282 is a Ca(2+) binding site. An N-linked (GlcNAc...) asparagine glycan is attached at Asn-370. Hemopexin repeat units follow at residues 371–419 (VTNI…FPGI) and 420–463 (DYKV…WFNC). Ca(2+) is bound by residues Asp-375 and Asp-424.

The protein belongs to the peptidase M10A family. Ca(2+) is required as a cofactor. Zn(2+) serves as cofactor.

The protein resides in the secreted. It is found in the extracellular space. It localises to the extracellular matrix. The enzyme catalyses Cleavage of the triple helix of collagen at about three-quarters of the length of the molecule from the N-terminus, at 775-Gly-|-Ile-776 in the alpha1(I) chain. Cleaves synthetic substrates and alpha-macroglobulins at bonds where P1' is a hydrophobic residue.. Its activity is regulated as follows. Can be activated without removal of the activation peptide. This Mus musculus (Mouse) protein is Interstitial collagenase B (Mmp1b).